The chain runs to 964 residues: Protein HIRA (964 aa).

WD repeat units follow at residues 10–50 (RHEG…KDNT), 64–103 (DHFGSVNCVRWAKHGRYLASGSDDQVILIHERKAGSGTSE), 123–162 (GHTADVVDLSWSPDDSTLASGSLDNTIHIWNMNNGICTAV), 165–204 (GHTSLVKGVTWDPIGSFIASQSDDKTVMIWRTSDWSLAHK), 259–331 (GHNA…PLFV), and 335–376 (FFSQ…HRLS). The disordered stretch occupies residues 453–490 (SHEDSKKTAGPTADDVKKGNQLSSPVKQREYRRPDGRK). Over residues 479–490 (KQREYRRPDGRK) the composition is skewed to basic and acidic residues. A WD 7 repeat occupies 644–685 (LWSDRISGKVTVLAGNANFWAVGCEDGFLQVYTRCGVRAMPA). A coiled-coil region spans residues 920-940 (ASNRKVQRLLNEFMDLLLEYE).

Belongs to the WD repeat HIR1 family. As to quaternary structure, interacts with RS2. In terms of tissue distribution, more abundant in apices and young leaf primordia than in fully expanded leaf tissues.

It localises to the nucleus. In terms of biological role, histone chaperone involved in maintining knox genes silencing throughout leaf development. The protein is Protein HIRA of Zea mays (Maize).